Consider the following 360-residue polypeptide: Ubiquitin carboxyl-terminal hydrolase MIY1 (360 aa).

The active-site Nucleophile is the Cys28. The active-site Proton acceptor is His216. The segment at 317-360 is disordered; that stretch reads KRKIHSHKKNSEIHAPVKKDKFKRRSSLLNAKASEKEKSECVVM. Basic and acidic residues-rich tracts occupy residues 325–335 and 349–360; these read KNSEIHAPVKK and ASEKEKSECVVM.

It belongs to the MINDY deubiquitinase family. FAM63 subfamily.

The protein localises to the cytoplasm. The catalysed reaction is Thiol-dependent hydrolysis of ester, thioester, amide, peptide and isopeptide bonds formed by the C-terminal Gly of ubiquitin (a 76-residue protein attached to proteins as an intracellular targeting signal).. Hydrolase that can specifically remove 'Lys-48'-linked conjugated ubiquitin from proteins. Has endodeubiquitinase activity. The sequence is that of Ubiquitin carboxyl-terminal hydrolase MIY1 from Saccharomyces cerevisiae (strain ATCC 204508 / S288c) (Baker's yeast).